Consider the following 196-residue polypeptide: Dehydrogenase RED3 (196 aa).

Ser47, Asp74, Asn101, Arg134, Tyr166, and Lys170 together coordinate NADP(+). The Proton acceptor role is filled by Tyr166. Lys170 serves as the catalytic Lowers pKa of active site Tyr.

Belongs to the short-chain dehydrogenases/reductases (SDR) family.

It carries out the reaction a primary alcohol + NAD(+) = an aldehyde + NADH + H(+). It catalyses the reaction a secondary alcohol + NAD(+) = a ketone + NADH + H(+). It functions in the pathway mycotoxin biosynthesis. In terms of biological role, dehydrogenase; part of the Tox1B locus, one of the 2 loci that mediate the biosynthesis of T-toxin, a family of linear polyketides 37 to 45 carbons in length, of which the major component is 41 carbons, and which leads to high virulence to maize. One of the PKSs (PKS1 or PKS2) could synthesize a precursor, used subsequently by the other PKS as starter unit, to add additional carbons. Variability in the length of the final carbon backbone C35-47 could be achieved by varying the number of condensation cycles, or use of different starter or extender units or might be due to decarboxylation of the penultimate product, catalyzed by DEC1. Additional proteins are required for the biosynthesis of T-toxin, including oxidoreductases RED1, RED2, RED3, LAM1 and OXI1, as well as esterase TOX9. This is Dehydrogenase RED3 from Cochliobolus heterostrophus (strain C4 / ATCC 48331 / race T) (Southern corn leaf blight fungus).